The primary structure comprises 127 residues: Glycine cleavage system H protein (127 aa).

In terms of domain architecture, Lipoyl-binding spans 24 to 105 (TALVGITDFA…YEDGWMVKVS (82 aa)). Lysine 65 carries the post-translational modification N6-lipoyllysine.

This sequence belongs to the GcvH family. As to quaternary structure, the glycine cleavage system is composed of four proteins: P, T, L and H. (R)-lipoate serves as cofactor.

In terms of biological role, the glycine cleavage system catalyzes the degradation of glycine. The H protein shuttles the methylamine group of glycine from the P protein to the T protein. This Prosthecochloris aestuarii (strain DSM 271 / SK 413) protein is Glycine cleavage system H protein.